A 589-amino-acid chain; its full sequence is Vomeromodulin (589 aa).

The first 29 residues, 1–29 (MWVLQALAIMLSIQAGVLDLVEVPPVVRS), serve as a signal peptide directing secretion. Disordered regions lie at residues 49 to 71 (GLNDPAKNRMLPPKRPGAPSRGG) and 146 to 170 (LLGKEGNEDPSKPSSGSKATGGLGQ). N-linked (GlcNAc...) asparagine glycans are attached at residues Asn-419 and Asn-437.

In terms of processing, N-glycosylated. The N-glycans consist mainly of complex sialylated and fucosylated biantennary structures. In terms of tissue distribution, abundant in the lateral nasal glands. Also present in the posterior septal and vomeronasal glands.

It localises to the secreted. In Rattus norvegicus (Rat), this protein is Vomeromodulin.